The sequence spans 448 residues: Chromosomal replication initiator protein DnaA (448 aa).

The interval 1 to 85 is domain I, interacts with DnaA modulators; that stretch reads MHDNLPQIWE…EVHIVVPSEE (85 aa). Positions 85-110 are domain II; that stretch reads ERVGDTQNINARRSNAQSPIMGNSPL. Positions 111 to 327 are domain III, AAA+ region; that stretch reads ILNPKYTFDT…GALIRIVAYS (217 aa). The ATP site is built by Gly155, Gly157, Lys158, and Thr159. A domain IV, binds dsDNA region spans residues 328–448; that stretch reads SLTNSEVTVE…DAIIKELKSD (121 aa).

The protein belongs to the DnaA family. Oligomerizes as a right-handed, spiral filament on DNA at oriC.

Its subcellular location is the cytoplasm. Its function is as follows. Plays an essential role in the initiation and regulation of chromosomal replication. ATP-DnaA binds to the origin of replication (oriC) to initiate formation of the DNA replication initiation complex once per cell cycle. Binds the DnaA box (a 9 base pair repeat at the origin) and separates the double-stranded (ds)DNA. Forms a right-handed helical filament on oriC DNA; dsDNA binds to the exterior of the filament while single-stranded (ss)DNA is stabiized in the filament's interior. The ATP-DnaA-oriC complex binds and stabilizes one strand of the AT-rich DNA unwinding element (DUE), permitting loading of DNA polymerase. After initiation quickly degrades to an ADP-DnaA complex that is not apt for DNA replication. Binds acidic phospholipids. This chain is Chromosomal replication initiator protein DnaA, found in Alkaliphilus metalliredigens (strain QYMF).